Here is a 90-residue protein sequence, read N- to C-terminus: Small ribosomal subunit protein uS19 (90 aa).

It belongs to the universal ribosomal protein uS19 family.

Functionally, protein S19 forms a complex with S13 that binds strongly to the 16S ribosomal RNA. This is Small ribosomal subunit protein uS19 from Methylococcus capsulatus (strain ATCC 33009 / NCIMB 11132 / Bath).